A 373-amino-acid polypeptide reads, in one-letter code: MEFKLKHKDGMARVCEITTAHSTFLTPVFMPVGTVGAVKSLDANDMKNELDAKIILANTYHMYLRPTSKVVKDFGGLHGFTKFDRSFLTDSGGFQAFSLSKNSKHFNEGIEFKSHIDGSRHLFTPKSVLDTQYDFNSDIMMILDDLVALPATKERVKISVDRTILWAKEAITYHKSMQNKGIGIGQNIFGIIQGGTDYKERKRCALSLNEMPFDGLAIGGLSVGEENALMYETVQNLNPYLDENRPRYLMGVGTPEDLVENVERGVDMFDCVMPTRNARNGTFFTSFGKFNIKKAEFINDHEAIDPACSCYTCCNFSRGYLNHLFKAKELTFFRLASLHNLHYYLELARKMREAILNNSFTQFKRNFYHLRGK.

The active-site Proton acceptor is the Asp90. Substrate-binding positions include 90 to 94, Asp144, Gln193, and Gly220; that span reads DSGGF. The tract at residues 251-257 is RNA binding; sequence GVGTPED. Asp270 acts as the Nucleophile in catalysis. Residues 275–279 are RNA binding; important for wobble base 34 recognition; sequence TRNAR. Residues Cys308, Cys310, Cys313, and His339 each coordinate Zn(2+).

Belongs to the queuine tRNA-ribosyltransferase family. As to quaternary structure, homodimer. Within each dimer, one monomer is responsible for RNA recognition and catalysis, while the other monomer binds to the replacement base PreQ1. The cofactor is Zn(2+).

It carries out the reaction 7-aminomethyl-7-carbaguanine + guanosine(34) in tRNA = 7-aminomethyl-7-carbaguanosine(34) in tRNA + guanine. It participates in tRNA modification; tRNA-queuosine biosynthesis. Functionally, catalyzes the base-exchange of a guanine (G) residue with the queuine precursor 7-aminomethyl-7-deazaguanine (PreQ1) at position 34 (anticodon wobble position) in tRNAs with GU(N) anticodons (tRNA-Asp, -Asn, -His and -Tyr). Catalysis occurs through a double-displacement mechanism. The nucleophile active site attacks the C1' of nucleotide 34 to detach the guanine base from the RNA, forming a covalent enzyme-RNA intermediate. The proton acceptor active site deprotonates the incoming PreQ1, allowing a nucleophilic attack on the C1' of the ribose to form the product. After dissociation, two additional enzymatic reactions on the tRNA convert PreQ1 to queuine (Q), resulting in the hypermodified nucleoside queuosine (7-(((4,5-cis-dihydroxy-2-cyclopenten-1-yl)amino)methyl)-7-deazaguanosine). The protein is Queuine tRNA-ribosyltransferase of Campylobacter jejuni subsp. jejuni serotype O:6 (strain 81116 / NCTC 11828).